Consider the following 166-residue polypeptide: Dynein regulatory complex protein 8 (166 aa).

The region spanning 95–130 (DDYHTLLRAFRAFDPDGRGFIDAESFKSLLTGKGEA) is the EF-hand domain.

The protein belongs to the DRC8 family. Component of the nexin-dynein regulatory complex (N-DRC).

The protein resides in the cytoplasm. The protein localises to the cytoskeleton. Its subcellular location is the flagellum axoneme. Component of the nexin-dynein regulatory complex (N-DRC), a key regulator of ciliary/flagellar motility which maintains the alignment and integrity of the distal axoneme and regulates microtubule sliding in motile axonemes. This chain is Dynein regulatory complex protein 8, found in Chlamydomonas reinhardtii (Chlamydomonas smithii).